A 307-amino-acid polypeptide reads, in one-letter code: MRKTGNRRERGAKTTIVRRQIKKNHAGHHGGAWKVAFADFTLAMMALFMTLWIVNSVSKSERESIIAALHGQSIFNGGGLSPLNKISPSHPPKPATVAAPEETEKKARDVNEKTALLKKKSATELGELATSINTIARDAHMEANLEMEIVPQGLRVLIKDDQNRNMFERGSAQIMPFFKTLLVELAPVFDSLDNKIIITGHTDAMAYKNNIYNNWNLSGDRALSARRVLEEAGMPEDKVMQVSAMADQMLLDAKNPQSAGNRRIEIMVLTKSASDTLYQYFGQHGDKVVQPLVQKLDKQQVHSQRTR.

Residues 32 to 54 (AWKVAFADFTLAMMALFMTLWIV) form a helical membrane-spanning segment. A disordered region spans residues 87-108 (SPSHPPKPATVAAPEETEKKAR). Residues 154 to 272 (LRVLIKDDQN…RIEIMVLTKS (119 aa)) enclose the OmpA-like domain.

Belongs to the MotB family.

The protein localises to the cell inner membrane. Functionally, part of the flagellar gene cluster Flag-2. However, the Flag-2 flagellar system could be inactive in strain 042 due to a frameshift in lfgC. The polypeptide is Putative flagellar export/assembly protein LafU (Escherichia coli O44:H18 (strain 042 / EAEC)).